The following is a 120-amino-acid chain: Large ribosomal subunit protein bL17 (120 aa).

This sequence belongs to the bacterial ribosomal protein bL17 family. Part of the 50S ribosomal subunit. Contacts protein L32.

This is Large ribosomal subunit protein bL17 from Shouchella clausii (strain KSM-K16) (Alkalihalobacillus clausii).